Here is a 21-residue protein sequence, read N- to C-terminus: SLVQFEKMIKEVAGKNGVPWY.

The protein belongs to the phospholipase A2 family. Group II subfamily. Requires Ca(2+) as cofactor. In terms of tissue distribution, expressed by the venom gland.

Its subcellular location is the secreted. The enzyme catalyses a 1,2-diacyl-sn-glycero-3-phosphocholine + H2O = a 1-acyl-sn-glycero-3-phosphocholine + a fatty acid + H(+). In terms of biological role, snake venom phospholipase A2 (PLA2) that induces a conspicuous local myotoxic effect and moderate footpad edema. In vitro, it shows anticoagulant effects and is not cytotoxic on myoblast but is able to lyse myotubes. PLA2 catalyzes the calcium-dependent hydrolysis of the 2-acyl groups in 3-sn-phosphoglycerides. This chain is Phospholipase A2 crotoxin basic chain, found in Crotalus durissus cumanensis (South American rattlesnake).